Consider the following 320-residue polypeptide: Putative cyclin-D7-1 (320 aa).

Residues 1–46 (MDDDDDTSFNNSLDLYCDEDPFDSTPPPPPPPPEQQQQAGTTTPDD) are disordered. Pro residues predominate over residues 24-34 (STPPPPPPPPE). A compositionally biased stretch (low complexity) spans 35–44 (QQQQAGTTTP).

It belongs to the cyclin family. Cyclin D subfamily.

The polypeptide is Putative cyclin-D7-1 (CYCD7-1) (Oryza sativa subsp. japonica (Rice)).